A 214-amino-acid polypeptide reads, in one-letter code: uncharacterized protein (214 aa).

5 helical membrane-spanning segments follow: residues 33–53 (VILF…ILVV), 104–124 (ILGI…SYVL), 132–152 (FIYL…LSAS), 153–173 (GGVL…FGTK), and 186–206 (LLIL…TITF).

It is found in the cell membrane. This is an uncharacterized protein from Methanocaldococcus jannaschii (strain ATCC 43067 / DSM 2661 / JAL-1 / JCM 10045 / NBRC 100440) (Methanococcus jannaschii).